The sequence spans 216 residues: Adenylate kinase (216 aa).

Gly-10 to Thr-15 contributes to the ATP binding site. An NMP region spans residues Ser-30 to Val-59. Residues Thr-31, Arg-36, Asp-57 to Val-59, Gly-85 to Arg-88, and Gln-92 each bind AMP. An LID region spans residues Gly-126–Asp-163. Position 127 (Arg-127) interacts with ATP. Zn(2+) is bound by residues Cys-130 and Cys-133. ATP is bound at residue Thr-136 to Tyr-137. Zn(2+) contacts are provided by Cys-150 and Cys-153. AMP is bound by residues Arg-160 and Arg-171. Residue Gln-199 participates in ATP binding.

Belongs to the adenylate kinase family. Monomer.

Its subcellular location is the cytoplasm. It carries out the reaction AMP + ATP = 2 ADP. The protein operates within purine metabolism; AMP biosynthesis via salvage pathway; AMP from ADP: step 1/1. Functionally, catalyzes the reversible transfer of the terminal phosphate group between ATP and AMP. Plays an important role in cellular energy homeostasis and in adenine nucleotide metabolism. The sequence is that of Adenylate kinase from Geobacillus sp. (strain WCH70).